Reading from the N-terminus, the 225-residue chain is Ribose-5-phosphate isomerase A (225 aa).

Substrate-binding positions include 27–30, 80–83, and 93–96; these read SGST, DGAD, and KGGG. E102 functions as the Proton acceptor in the catalytic mechanism. K120 contributes to the substrate binding site.

This sequence belongs to the ribose 5-phosphate isomerase family. As to quaternary structure, homodimer.

The enzyme catalyses aldehydo-D-ribose 5-phosphate = D-ribulose 5-phosphate. It functions in the pathway carbohydrate degradation; pentose phosphate pathway; D-ribose 5-phosphate from D-ribulose 5-phosphate (non-oxidative stage): step 1/1. Catalyzes the reversible conversion of ribose-5-phosphate to ribulose 5-phosphate. In Korarchaeum cryptofilum (strain OPF8), this protein is Ribose-5-phosphate isomerase A.